A 224-amino-acid polypeptide reads, in one-letter code: MAEAKPAPEKEAAVKTESVPVADDEAASAKEGSTSLVSIDEYLAAGVHIGTQQKTQDMMRFVYRVRTDGLYVLDIQSTDERIRVASKLLSHYDPSRILVVSSRQYGQHPARMFSRALGTRAMLGRFIPGSLTNPQIHGFFEPDVIIVTDPAGDAQVLKEASSIGVPVIALCDTNNLTSNVDLVIPTNNKGRKALSLVYWLLAREVSRLNNTPFNYEMTDFETPL.

Basic and acidic residues predominate over residues 1–14 (MAEAKPAPEKEAAV). The segment at 1–32 (MAEAKPAPEKEAAVKTESVPVADDEAASAKEG) is disordered.

The protein belongs to the universal ribosomal protein uS2 family.

This Methanosarcina mazei (strain ATCC BAA-159 / DSM 3647 / Goe1 / Go1 / JCM 11833 / OCM 88) (Methanosarcina frisia) protein is Small ribosomal subunit protein uS2.